The sequence spans 84 residues: ATP synthase subunit c (84 aa).

2 helical membrane passes run 10 to 30 (IAVA…FAIL) and 53 to 73 (FIVA…ALFF).

It belongs to the ATPase C chain family. As to quaternary structure, F-type ATPases have 2 components, F(1) - the catalytic core - and F(0) - the membrane proton channel. F(1) has five subunits: alpha(3), beta(3), gamma(1), delta(1), epsilon(1). F(0) has three main subunits: a(1), b(2) and c(10-14). The alpha and beta chains form an alternating ring which encloses part of the gamma chain. F(1) is attached to F(0) by a central stalk formed by the gamma and epsilon chains, while a peripheral stalk is formed by the delta and b chains.

The protein localises to the cell inner membrane. In terms of biological role, f(1)F(0) ATP synthase produces ATP from ADP in the presence of a proton or sodium gradient. F-type ATPases consist of two structural domains, F(1) containing the extramembraneous catalytic core and F(0) containing the membrane proton channel, linked together by a central stalk and a peripheral stalk. During catalysis, ATP synthesis in the catalytic domain of F(1) is coupled via a rotary mechanism of the central stalk subunits to proton translocation. Functionally, key component of the F(0) channel; it plays a direct role in translocation across the membrane. A homomeric c-ring of between 10-14 subunits forms the central stalk rotor element with the F(1) delta and epsilon subunits. The sequence is that of ATP synthase subunit c from Shewanella putrefaciens (strain CN-32 / ATCC BAA-453).